The primary structure comprises 439 residues: 26S proteasome regulatory subunit 4 (439 aa).

Disordered regions lie at residues 1-48 (MGQN…AMKL) and 82-104 (ERLKPQDEKNEEERSKVDDLRGT). Basic and acidic residues-rich tracts occupy residues 12–25 (GEKKDDKDKKKKYE) and 82–102 (ERLKPQDEKNEEERSKVDDLR). 225 to 232 (GPPGTGKT) contributes to the ATP binding site.

It belongs to the AAA ATPase family. In terms of assembly, interacts with PSMD5.

The protein localises to the cytoplasm. It is found in the nucleus. In terms of biological role, the 26S proteasome is involved in the ATP-dependent degradation of ubiquitinated proteins. The regulatory (or ATPase) complex confers ATP dependency and substrate specificity to the 26S complex. The chain is 26S proteasome regulatory subunit 4 (Rpt2) from Drosophila melanogaster (Fruit fly).